The primary structure comprises 275 residues: Gibberellin-regulated protein 14 (275 aa).

The N-terminal stretch at 1–21 (MALSLLSVFIFFHVFTNVVFA) is a signal peptide. The interval 34-207 (PTPTLPSPSP…TAPPVKPPTP (174 aa)) is disordered. The segment covering 36 to 207 (PTLPSPSPAT…TAPPVKPPTP (172 aa)) has biased composition (pro residues).

Belongs to the GASA family. Six disulfide bonds may be present. In terms of tissue distribution, expressed in flower abscission zone, style, stamen filaments and lateral roots.

The protein localises to the secreted. Gibberellin-regulated protein that may function in hormonal controlled steps of development such as seed germination, flowering and seed maturation. This chain is Gibberellin-regulated protein 14 (GASA14), found in Arabidopsis thaliana (Mouse-ear cress).